A 205-amino-acid polypeptide reads, in one-letter code: Thymidylate kinase (205 aa).

13-20 serves as a coordination point for ATP; that stretch reads GIDGSGKS.

It belongs to the thymidylate kinase family.

The enzyme catalyses dTMP + ATP = dTDP + ADP. Phosphorylation of dTMP to form dTDP in both de novo and salvage pathways of dTTP synthesis. The polypeptide is Thymidylate kinase (Leptospira borgpetersenii serovar Hardjo-bovis (strain L550)).